The chain runs to 259 residues: ATP synthase subunit a (259 aa).

Transmembrane regions (helical) follow at residues 29–49 (TVNI…IWLF), 89–109 (LIAP…AMDL), 132–154 (SADV…FYSI), 209–229 (IFIL…NVPW), and 230–250 (AIFH…LTIV).

The protein belongs to the ATPase A chain family. As to quaternary structure, F-type ATPases have 2 components, CF(1) - the catalytic core - and CF(0) - the membrane proton channel. CF(1) has five subunits: alpha(3), beta(3), gamma(1), delta(1), epsilon(1). CF(0) has three main subunits: a(1), b(2) and c(9-12). The alpha and beta chains form an alternating ring which encloses part of the gamma chain. CF(1) is attached to CF(0) by a central stalk formed by the gamma and epsilon chains, while a peripheral stalk is formed by the delta and b chains.

The protein localises to the cell inner membrane. In terms of biological role, key component of the proton channel; it plays a direct role in the translocation of protons across the membrane. The sequence is that of ATP synthase subunit a from Tolumonas auensis (strain DSM 9187 / NBRC 110442 / TA 4).